The chain runs to 20 residues: Large ribosomal subunit protein bL33 (20 aa).

This sequence belongs to the bacterial ribosomal protein bL33 family.

The sequence is that of Large ribosomal subunit protein bL33 (rpmG) from Brevundimonas vesicularis (Pseudomonas vesicularis).